The primary structure comprises 85 residues: Small ribosomal subunit protein bS16c (85 aa).

Belongs to the bacterial ribosomal protein bS16 family.

It localises to the plastid. The protein localises to the chloroplast. The sequence is that of Small ribosomal subunit protein bS16c from Agrostis stolonifera (Creeping bentgrass).